Reading from the N-terminus, the 223-residue chain is Protein Wnt-1 (223 aa).

3 disulfides stabilise this stretch: cysteine 7/cysteine 24, cysteine 72/cysteine 86, and cysteine 74/cysteine 81. Serine 78 carries the O-palmitoleoyl serine; by PORCN lipid modification. Positions valine 110–lysine 135 are disordered. Polar residues predominate over residues serine 125–lysine 135. 6 disulfide bridges follow: cysteine 152-cysteine 183, cysteine 168-cysteine 178, cysteine 182-cysteine 222, cysteine 198-cysteine 213, cysteine 200-cysteine 210, and cysteine 205-cysteine 206. Asparagine 169 carries N-linked (GlcNAc...) asparagine glycosylation.

This sequence belongs to the Wnt family. Palmitoleoylation is required for efficient binding to frizzled receptors. Palmitoleoylation is necessary for proper trafficking to cell surface. Depalmitoleoylated by NOTUM, leading to inhibit Wnt signaling pathway.

It is found in the secreted. Its subcellular location is the extracellular space. The protein localises to the extracellular matrix. Its function is as follows. Ligand for members of the frizzled family of seven transmembrane receptors. Probable developmental protein. The sequence is that of Protein Wnt-1 (WNT-1) from Strongylocentrotus purpuratus (Purple sea urchin).